A 130-amino-acid polypeptide reads, in one-letter code: MSGRGKQGGKARAKAKTRSSRAGLQFPVGRVHRLLRKGNYAERVGAGAPVYLAAVLEYLTAEILELAGNAARDNKKTRIIPRHLQLAIRNDEELNKLLGKVTIAQGGVLPNIQAVLLPKKTESHHKAKGK.

Positions 1–22 (MSGRGKQGGKARAKAKTRSSRA) are disordered. An N-acetylserine modification is found at serine 2. Position 2 is a phosphoserine; by RPS6KA5 (serine 2). A Citrulline; alternate modification is found at arginine 4. A Symmetric dimethylarginine; by PRMT5; alternate modification is found at arginine 4. Lysine 6 is subject to N6-(2-hydroxyisobutyryl)lysine. Residues 7-19 (QGGKARAKAKTRS) are compositionally biased toward basic residues. Position 10 is an N6-(2-hydroxyisobutyryl)lysine; alternate (lysine 10). An N6-lactoyllysine; alternate modification is found at lysine 10. Lysine 10 bears the N6-succinyllysine; alternate mark. Residues lysine 14 and lysine 16 each participate in a glycyl lysine isopeptide (Lys-Gly) (interchain with G-Cter in ubiquitin) cross-link. An N6-(2-hydroxyisobutyryl)lysine; alternate modification is found at lysine 37. N6-(beta-hydroxybutyryl)lysine; alternate is present on lysine 37. Residue lysine 37 is modified to N6-crotonyllysine; alternate. 2 positions are modified to N6-(2-hydroxyisobutyryl)lysine: lysine 75 and lysine 76. Lysine 96 bears the N6-(2-hydroxyisobutyryl)lysine; alternate mark. Lysine 96 carries the post-translational modification N6-succinyllysine; alternate. Lysine 96 carries the post-translational modification N6-glutaryllysine; alternate. Lysine 100 is subject to N6-glutaryllysine. N5-methylglutamine is present on glutamine 105. Lysine 119 is subject to N6-(2-hydroxyisobutyryl)lysine; alternate. Lysine 119 and lysine 120 each carry N6-crotonyllysine; alternate. Residues lysine 119 and lysine 120 each carry the N6-glutaryllysine; alternate modification. Lysine 120 participates in a covalent cross-link: Glycyl lysine isopeptide (Lys-Gly) (interchain with G-Cter in ubiquitin); alternate. Phosphothreonine; by DCAF1 is present on threonine 121. Position 126 is an N6-crotonyllysine; alternate (lysine 126). The residue at position 126 (lysine 126) is an N6-glutaryllysine; alternate.

This sequence belongs to the histone H2A family. In terms of assembly, the nucleosome is a histone octamer containing two molecules each of H2A, H2B, H3 and H4 assembled in one H3-H4 heterotetramer and two H2A-H2B heterodimers. The octamer wraps approximately 147 bp of DNA. Interacts with VRK1; the interaction is mediated by the nucleosome acidic patch, a cluster of negatively charged residues of H2A and H2B forming a cleft within the nucleosome core. In terms of processing, deiminated on Arg-4 in granulocytes upon calcium entry. Post-translationally, monoubiquitination of Lys-120 (H2AK119Ub) by RING1, TRIM37 and RNF2/RING2 complex gives a specific tag for epigenetic transcriptional repression and participates in X chromosome inactivation of female mammals. It is involved in the initiation of both imprinted and random X inactivation. Ubiquitinated H2A is enriched in inactive X chromosome chromatin. Ubiquitination of H2A functions downstream of methylation of 'Lys-27' of histone H3 (H3K27me). H2AK119Ub by RNF2/RING2 can also be induced by ultraviolet and may be involved in DNA repair. Following DNA double-strand breaks (DSBs), it is ubiquitinated through 'Lys-63' linkage of ubiquitin moieties by the E2 ligase UBE2N and the E3 ligases RNF8 and RNF168, leading to the recruitment of repair proteins to sites of DNA damage. Ubiquitination at Lys-14 and Lys-16 (H2AK13Ub and H2AK15Ub, respectively) in response to DNA damage is initiated by RNF168 that mediates monoubiquitination at these 2 sites, and 'Lys-63'-linked ubiquitin are then conjugated to monoubiquitin; RNF8 is able to extend 'Lys-63'-linked ubiquitin chains in vitro. H2AK119Ub and ionizing radiation-induced 'Lys-63'-linked ubiquitination (H2AK13Ub and H2AK15Ub) are distinct events. Phosphorylation on Ser-2 (H2AS1ph) is enhanced during mitosis. Phosphorylation on Ser-2 by RPS6KA5/MSK1 directly represses transcription. Acetylation of H3 inhibits Ser-2 phosphorylation by RPS6KA5/MSK1. Phosphorylation at Thr-121 (H2AT120ph) by DCAF1 is present in the regulatory region of many tumor suppresor genes and down-regulates their transcription. In terms of processing, symmetric dimethylation on Arg-4 by the PRDM1/PRMT5 complex may play a crucial role in the germ-cell lineage. Post-translationally, glutamine methylation at Gln-105 (H2AQ104me) by FBL is specifically dedicated to polymerase I. It is present at 35S ribosomal DNA locus and impairs binding of the FACT complex. Crotonylation (Kcr) is specifically present in male germ cells and marks testis-specific genes in post-meiotic cells, including X-linked genes that escape sex chromosome inactivation in haploid cells. Crotonylation marks active promoters and enhancers and confers resistance to transcriptional repressors. It is also associated with post-meiotically activated genes on autosomes. In terms of processing, lactylated in macrophages by EP300/P300 by using lactoyl-CoA directly derived from endogenous or exogenous lactate, leading to stimulates gene transcription.

The protein localises to the nucleus. The protein resides in the chromosome. In terms of biological role, core component of nucleosome. Nucleosomes wrap and compact DNA into chromatin, limiting DNA accessibility to the cellular machineries which require DNA as a template. Histones thereby play a central role in transcription regulation, DNA repair, DNA replication and chromosomal stability. DNA accessibility is regulated via a complex set of post-translational modifications of histones, also called histone code, and nucleosome remodeling. The polypeptide is Histone H2A type 1 (Bos taurus (Bovine)).